Here is a 269-residue protein sequence, read N- to C-terminus: MKFAVIGNPISHSLSPLMHHANFQSLNLENTYEAINVPVNQFQDIKKIISEKSIDGFNVTIPHKERIIPYLDDINEQAKSVGAVNTVLVKDGKWIGYNTDGIGYVNGLKQIYEGIEDAYILILGAGGASKGIANELYKIVRPTLTVANRTMSRFNNWSLNINKINLSHAESHLDEFDIIINTTPAGMNGNTDSVISLNRLASHTLVSDIVYNPYKTPILIEAEQRGNPIYNGLDMFVHQGAESFKIWTNLEPDIKAMKNIVIQKLKGEL.

Shikimate-binding positions include 13–15 (SLS) and T60. The active-site Proton acceptor is K64. E76 lines the NADP(+) pocket. Positions 85 and 100 each coordinate shikimate. Residues 124–128 (GAGGA), 148–153 (NRTMSR), and I209 contribute to the NADP(+) site. Y211 lines the shikimate pocket. G232 provides a ligand contact to NADP(+). Shikimate is bound at residue Q239.

Belongs to the shikimate dehydrogenase family. In terms of assembly, monomer or homodimer.

It catalyses the reaction shikimate + NADP(+) = 3-dehydroshikimate + NADPH + H(+). It participates in metabolic intermediate biosynthesis; chorismate biosynthesis; chorismate from D-erythrose 4-phosphate and phosphoenolpyruvate: step 4/7. In terms of biological role, involved in the biosynthesis of the chorismate, which leads to the biosynthesis of aromatic amino acids. Catalyzes the reversible NADPH linked reduction of 3-dehydroshikimate (DHSA) to yield shikimate (SA). It can also use NAD to oxidize shikimate. The protein is Shikimate dehydrogenase (NADP(+)) of Staphylococcus epidermidis (strain ATCC 35984 / DSM 28319 / BCRC 17069 / CCUG 31568 / BM 3577 / RP62A).